Reading from the N-terminus, the 179-residue chain is Endoribonuclease YbeY (179 aa).

Zn(2+) contacts are provided by His-148, His-152, and His-158.

It belongs to the endoribonuclease YbeY family. Requires Zn(2+) as cofactor.

It is found in the cytoplasm. Functionally, single strand-specific metallo-endoribonuclease involved in late-stage 70S ribosome quality control and in maturation of the 3' terminus of the 16S rRNA. The protein is Endoribonuclease YbeY of Prochlorococcus marinus (strain MIT 9312).